The primary structure comprises 609 residues: Elongation factor 4 (609 aa).

Positions 11-193 (ERIRNFSIIA…QIVEKIPAPS (183 aa)) constitute a tr-type G domain. GTP is bound by residues 23–28 (DHGKST) and 140–143 (NKID).

The protein belongs to the TRAFAC class translation factor GTPase superfamily. Classic translation factor GTPase family. LepA subfamily.

It is found in the cell membrane. The catalysed reaction is GTP + H2O = GDP + phosphate + H(+). In terms of biological role, required for accurate and efficient protein synthesis under certain stress conditions. May act as a fidelity factor of the translation reaction, by catalyzing a one-codon backward translocation of tRNAs on improperly translocated ribosomes. Back-translocation proceeds from a post-translocation (POST) complex to a pre-translocation (PRE) complex, thus giving elongation factor G a second chance to translocate the tRNAs correctly. Binds to ribosomes in a GTP-dependent manner. This is Elongation factor 4 from Geobacillus thermodenitrificans (strain NG80-2).